The primary structure comprises 405 residues: Probable tRNA sulfurtransferase (405 aa).

The THUMP domain maps to Thr-60 to Thr-165. ATP-binding positions include Met-183–Leu-184, His-208–Phe-209, Arg-265, Gly-287, and Gln-296.

It belongs to the ThiI family.

Its subcellular location is the cytoplasm. The enzyme catalyses [ThiI sulfur-carrier protein]-S-sulfanyl-L-cysteine + a uridine in tRNA + 2 reduced [2Fe-2S]-[ferredoxin] + ATP + H(+) = [ThiI sulfur-carrier protein]-L-cysteine + a 4-thiouridine in tRNA + 2 oxidized [2Fe-2S]-[ferredoxin] + AMP + diphosphate. The catalysed reaction is [ThiS sulfur-carrier protein]-C-terminal Gly-Gly-AMP + S-sulfanyl-L-cysteinyl-[cysteine desulfurase] + AH2 = [ThiS sulfur-carrier protein]-C-terminal-Gly-aminoethanethioate + L-cysteinyl-[cysteine desulfurase] + A + AMP + 2 H(+). The protein operates within cofactor biosynthesis; thiamine diphosphate biosynthesis. Catalyzes the ATP-dependent transfer of a sulfur to tRNA to produce 4-thiouridine in position 8 of tRNAs, which functions as a near-UV photosensor. Also catalyzes the transfer of sulfur to the sulfur carrier protein ThiS, forming ThiS-thiocarboxylate. This is a step in the synthesis of thiazole, in the thiamine biosynthesis pathway. The sulfur is donated as persulfide by IscS. This is Probable tRNA sulfurtransferase from Levilactobacillus brevis (strain ATCC 367 / BCRC 12310 / CIP 105137 / JCM 1170 / LMG 11437 / NCIMB 947 / NCTC 947) (Lactobacillus brevis).